Consider the following 62-residue polypeptide: Large ribosomal subunit protein uL29 (62 aa).

It belongs to the universal ribosomal protein uL29 family.

The polypeptide is Large ribosomal subunit protein uL29 (Enterococcus faecalis (strain ATCC 700802 / V583)).